Reading from the N-terminus, the 205-residue chain is Large ribosomal subunit protein uL4 (205 aa).

A disordered region spans residues alanine 43 to arginine 78.

The protein belongs to the universal ribosomal protein uL4 family. As to quaternary structure, part of the 50S ribosomal subunit.

One of the primary rRNA binding proteins, this protein initially binds near the 5'-end of the 23S rRNA. It is important during the early stages of 50S assembly. It makes multiple contacts with different domains of the 23S rRNA in the assembled 50S subunit and ribosome. Its function is as follows. Forms part of the polypeptide exit tunnel. This is Large ribosomal subunit protein uL4 from Halorhodospira halophila (strain DSM 244 / SL1) (Ectothiorhodospira halophila (strain DSM 244 / SL1)).